We begin with the raw amino-acid sequence, 470 residues long: FRIGIDA-like protein 1 (470 aa).

The stretch at 336-369 (KDQNLESEFTQEKVEERVEELEKNKALRKRNTTN) forms a coiled coil. The interval 355–400 (ELEKNKALRKRNTTNPPKQEPQQKGKKRTRDCKNGSQVPVPSQQLL) is disordered. Polar residues predominate over residues 388-400 (NGSQVPVPSQQLL).

Belongs to the Frigida family. As to quaternary structure, component of the transcription activator complex FRI-C composed of FRI, FRL1, SUF4, FLX and FES1. Interacts with FRI and SUF4. Expressed during seed development and in dry seed. Preferentially expressed in the chalazal endosperm during early stages of seed development.

Its function is as follows. Required for FRI-mediated up-regulation of FLC transcripts, but not redundant with FRI and only partially redundant with FRL2. Required for the stabilization of the FRI-C complex. This Arabidopsis thaliana (Mouse-ear cress) protein is FRIGIDA-like protein 1 (FRL1).